Reading from the N-terminus, the 214-residue chain is MKASFWHEKWKKREIGFHESVVNPALTDHWHALSAAGGSVFVPLCGKSLDLGWLLSQGVSVIGVELSEIAVQELFVSLDIEPSVSDVENFKLYSAENIAIWVGDIFNLNKAWLGVITAIYDRAALVALPESMRLEYAGKLIELSNCATQLLVTFEYDQSLHQGPPFSVPESAVQKCYGTRYQLQCLERKAVAGGLKGRIAATESVWKLSRNINS.

S-adenosyl-L-methionine contacts are provided by tryptophan 10, leucine 44, glutamate 65, and arginine 122.

Belongs to the class I-like SAM-binding methyltransferase superfamily. TPMT family.

It localises to the cytoplasm. The catalysed reaction is S-adenosyl-L-methionine + a thiopurine = S-adenosyl-L-homocysteine + a thiopurine S-methylether.. The protein is Thiopurine S-methyltransferase of Teredinibacter turnerae (strain ATCC 39867 / T7901).